The primary structure comprises 170 residues: Adenine phosphoribosyltransferase (170 aa).

It belongs to the purine/pyrimidine phosphoribosyltransferase family. As to quaternary structure, homodimer.

The protein resides in the cytoplasm. The enzyme catalyses AMP + diphosphate = 5-phospho-alpha-D-ribose 1-diphosphate + adenine. Its pathway is purine metabolism; AMP biosynthesis via salvage pathway; AMP from adenine: step 1/1. In terms of biological role, catalyzes a salvage reaction resulting in the formation of AMP, that is energically less costly than de novo synthesis. The polypeptide is Adenine phosphoribosyltransferase (Geobacillus thermodenitrificans (strain NG80-2)).